The following is a 565-amino-acid chain: DNA mismatch repair protein MutL (565 aa).

Belongs to the DNA mismatch repair MutL/HexB family.

Its function is as follows. This protein is involved in the repair of mismatches in DNA. It is required for dam-dependent methyl-directed DNA mismatch repair. May act as a 'molecular matchmaker', a protein that promotes the formation of a stable complex between two or more DNA-binding proteins in an ATP-dependent manner without itself being part of a final effector complex. In Desulforudis audaxviator (strain MP104C), this protein is DNA mismatch repair protein MutL.